A 105-amino-acid chain; its full sequence is Met repressor (105 aa).

It belongs to the MetJ family. Homodimer.

The protein localises to the cytoplasm. This regulatory protein, when combined with SAM (S-adenosylmethionine) represses the expression of the methionine regulon and of enzymes involved in SAM synthesis. This chain is Met repressor, found in Haemophilus influenzae (strain PittEE).